Consider the following 132-residue polypeptide: L-ectoine synthase (132 aa).

Belongs to the ectoine synthase family.

The catalysed reaction is (2S)-4-acetamido-2-aminobutanoate = L-ectoine + H2O. It participates in amine and polyamine biosynthesis; ectoine biosynthesis; L-ectoine from L-aspartate 4-semialdehyde: step 3/3. Catalyzes the circularization of gamma-N-acetyl-alpha,gamma-diaminobutyric acid (ADABA) to ectoine (1,4,5,6-tetrahydro-2-methyl-4-pyrimidine carboxylic acid), which is an excellent osmoprotectant. The protein is L-ectoine synthase of Saccharophagus degradans (strain 2-40 / ATCC 43961 / DSM 17024).